Consider the following 122-residue polypeptide: Probable non-specific lipid-transfer protein 3 (122 aa).

The N-terminal stretch at 1–29 is a signal peptide; sequence MARLNSKAVAAAVVLAAVVLMMAGREASA. Cystine bridges form between Cys33/Cys81, Cys43/Cys58, Cys59/Cys104, and Cys79/Cys118.

It belongs to the plant LTP family. In terms of tissue distribution, expressed in phloem. Also detected in the epidermis near the vascular tissues in resistant plants infected by Hessian fly larvae.

In terms of biological role, plant non-specific lipid-transfer proteins transfer phospholipids as well as galactolipids across membranes. May play a role in wax or cutin deposition in the cell walls of expanding epidermal cells and certain secretory tissues. This chain is Probable non-specific lipid-transfer protein 3 (LTP3), found in Triticum aestivum (Wheat).